A 205-amino-acid polypeptide reads, in one-letter code: DNA-directed RNA polymerase RPB5 homolog (205 aa).

This sequence belongs to the archaeal RpoH/eukaryotic RPB5 RNA polymerase subunit family. In terms of assembly, part of the viral DNA-directed RNA polymerase that consists of 8 polII-like subunits (RPB1, RPB2, RPB3, RPB5, RPB6, RPB7, RPB9, RPB10), a capping enzyme and a termination factor.

It localises to the host cytoplasm. The protein resides in the virion. In terms of biological role, component of the DNA-directed RNA polymerase (RNAP) that catalyzes the transcription in the cytoplasm of viral DNA into RNA using the four ribonucleoside triphosphates as substrates. This Ornithodoros (relapsing fever ticks) protein is DNA-directed RNA polymerase RPB5 homolog.